Consider the following 155-residue polypeptide: Small ribosomal subunit protein uS7c (155 aa).

The protein belongs to the universal ribosomal protein uS7 family. As to quaternary structure, part of the 30S ribosomal subunit.

The protein resides in the plastid. It is found in the chloroplast. In terms of biological role, one of the primary rRNA binding proteins, it binds directly to 16S rRNA where it nucleates assembly of the head domain of the 30S subunit. The protein is Small ribosomal subunit protein uS7c (rps7) of Stewartia pseudocamellia (Japanese stewartia).